A 125-amino-acid chain; its full sequence is Glutaredoxin-C1 (125 aa).

Positions 19–119 constitute a Glutaredoxin domain; sequence VNKAKEIVSA…PLLTEAGAIA (101 aa). C39 and C42 form a disulfide bridge.

It belongs to the glutaredoxin family. CPYC subfamily.

It localises to the cytoplasm. Functionally, has a glutathione-disulfide oxidoreductase activity in the presence of NADPH and glutathione reductase. Reduces low molecular weight disulfides and proteins. The protein is Glutaredoxin-C1 (GRXC1) of Arabidopsis thaliana (Mouse-ear cress).